The chain runs to 460 residues: Fumarate hydratase class II (460 aa).

Residues 95 to 97 (SGT), 126 to 129 (HPND), 136 to 138 (SSN), and Thr-184 contribute to the substrate site. Residue His-185 is the Proton donor/acceptor of the active site. Residue Ser-315 is part of the active site. Substrate contacts are provided by residues Ser-316 and 321-323 (KIN).

The protein belongs to the class-II fumarase/aspartase family. Fumarase subfamily. In terms of assembly, homotetramer.

It is found in the cytoplasm. It carries out the reaction (S)-malate = fumarate + H2O. The protein operates within carbohydrate metabolism; tricarboxylic acid cycle; (S)-malate from fumarate: step 1/1. Involved in the TCA cycle. Catalyzes the stereospecific interconversion of fumarate to L-malate. In Chlamydia caviae (strain ATCC VR-813 / DSM 19441 / 03DC25 / GPIC) (Chlamydophila caviae), this protein is Fumarate hydratase class II.